The following is a 413-amino-acid chain: NPL4-like protein 2 (413 aa).

Residue Ser-104 is modified to Phosphoserine. One can recognise an MPN domain in the interval 131-272; it reads SVSFDRDAAN…ADVHFEAFQM (142 aa).

It belongs to the NPL4 family.

Its pathway is protein degradation; proteasomal ubiquitin-dependent pathway. May be part of a complex that binds ubiquitinated proteins and that is necessary for the export of misfolded proteins from the ER to the cytoplasm, where they are degraded by the proteasome. The chain is NPL4-like protein 2 from Arabidopsis thaliana (Mouse-ear cress).